The chain runs to 377 residues: All-trans-retinol dehydrogenase [NAD(+)] ADH4 (377 aa).

Cysteine 47 serves as a coordination point for Zn(2+). 48–49 (PT) contributes to the NAD(+) binding site. Histidine 68, cysteine 98, cysteine 101, cysteine 104, cysteine 112, and cysteine 179 together coordinate Zn(2+). NAD(+) is bound by residues 204–209 (GLGCVG), aspartate 228, lysine 233, 297–299 (VGA), 320–322 (TFF), and arginine 372.

Belongs to the zinc-containing alcohol dehydrogenase family. Class-II subfamily. As to quaternary structure, dimer. It depends on Zn(2+) as a cofactor. As to expression, liver specific.

It localises to the cytoplasm. The catalysed reaction is all-trans-retinol + NAD(+) = all-trans-retinal + NADH + H(+). It carries out the reaction 9-cis-retinol + NAD(+) = 9-cis-retinal + NADH + H(+). The enzyme catalyses 20-oxo-(5Z,8Z,11Z,14Z)-eicosatetraenoate + NAD(+) + H2O = (5Z,8Z,11Z,14Z)-eicosatetraenedioate + NADH + 2 H(+). It catalyses the reaction 20-hydroxy-(5Z,8Z,11Z,14Z)-eicosatetraenoate + NAD(+) = 20-oxo-(5Z,8Z,11Z,14Z)-eicosatetraenoate + NADH + H(+). The catalysed reaction is 1,4-benzoquinone + NADH + H(+) = hydroquinone + NAD(+). With respect to regulation, oxidation of 20-HETE is inhibited by low concentrations of N-heptylformamide. Oxidation of 20-HETE is a decreased by 55-65% by either all-trans-retinol or all-trans-retinoic acid. Strongly inhibited by omega-hydroxy fatty acids. In terms of biological role, catalyzes the NAD-dependent oxidation of either all-trans-retinol or 9-cis-retinol. Also oxidizes long chain omega-hydroxy fatty acids, such as 20-HETE, producing both the intermediate aldehyde, 20-oxoarachidonate and the end product, a dicarboxylic acid, (5Z,8Z,11Z,14Z)-eicosatetraenedioate. Also catalyzes the reduction of benzoquinones. The protein is All-trans-retinol dehydrogenase [NAD(+)] ADH4 of Rattus norvegicus (Rat).